Consider the following 60-residue polypeptide: Large ribosomal subunit protein bL32 (60 aa).

Residues 1 to 16 are compositionally biased toward basic residues; the sequence is MAVPRRKTSPSRRGMR. The segment at 1-60 is disordered; it reads MAVPRRKTSPSRRGMRRSADAIKKPTYVEDKDSGELRRPHHLDLKTGMYKGRQVLKKKES. The span at 17 to 44 shows a compositional bias: basic and acidic residues; it reads RSADAIKKPTYVEDKDSGELRRPHHLDL.

It belongs to the bacterial ribosomal protein bL32 family.

The sequence is that of Large ribosomal subunit protein bL32 from Bradyrhizobium diazoefficiens (strain JCM 10833 / BCRC 13528 / IAM 13628 / NBRC 14792 / USDA 110).